The primary structure comprises 262 residues: MTTGLLQGKRGIITGIANNMSISWAIAQLARKHGAELCFTYQSEILEKRVKPLAEEVGCNFVSELDVTNPESITNLFAEVKEKWGTFDFLLHGMAFSDRNELKGRYIDTSLGNFNNSLHISCYSLVELAREAEKLMNDGGSIVTLSYYGAEKVIPNYNVMGVAKAALEASVRYLANDMGENNIRVNAISAGPIKTLSGSVIGDFNSMLRSHAATAPLKRNTLQQDVAGAAVYLFSQLASGVTGEIHYVDCGYNVMGSNKIVG.

NAD(+)-binding positions include Gly-15, 21 to 22 (SI), Gln-42, 66 to 67 (DV), and Met-94. Ser-97 provides a ligand contact to substrate. Active-site proton acceptor residues include Tyr-147 and Tyr-157. Residues Lys-164 and 193 to 197 (IKTLS) each bind NAD(+).

It belongs to the short-chain dehydrogenases/reductases (SDR) family. FabI subfamily. In terms of assembly, homotetramer.

It catalyses the reaction a 2,3-saturated acyl-[ACP] + NAD(+) = a (2E)-enoyl-[ACP] + NADH + H(+). It functions in the pathway lipid metabolism; fatty acid biosynthesis. Catalyzes the reduction of a carbon-carbon double bond in an enoyl moiety that is covalently linked to an acyl carrier protein (ACP). Involved in the elongation cycle of fatty acid which are used in the lipid metabolism. The polypeptide is Enoyl-[acyl-carrier-protein] reductase [NADH] FabI (fabI) (Rickettsia bellii (strain RML369-C)).